The sequence spans 611 residues: 4-hydroxy-3-methylbut-2-en-1-yl diphosphate synthase (flavodoxin) (611 aa).

Positions 520, 523, 554, and 561 each coordinate [4Fe-4S] cluster.

It belongs to the IspG family. [4Fe-4S] cluster is required as a cofactor.

The catalysed reaction is (2E)-4-hydroxy-3-methylbut-2-enyl diphosphate + oxidized [flavodoxin] + H2O + 2 H(+) = 2-C-methyl-D-erythritol 2,4-cyclic diphosphate + reduced [flavodoxin]. It participates in isoprenoid biosynthesis; isopentenyl diphosphate biosynthesis via DXP pathway; isopentenyl diphosphate from 1-deoxy-D-xylulose 5-phosphate: step 5/6. Functionally, converts 2C-methyl-D-erythritol 2,4-cyclodiphosphate (ME-2,4cPP) into 1-hydroxy-2-methyl-2-(E)-butenyl 4-diphosphate. In Parabacteroides distasonis (strain ATCC 8503 / DSM 20701 / CIP 104284 / JCM 5825 / NCTC 11152), this protein is 4-hydroxy-3-methylbut-2-en-1-yl diphosphate synthase (flavodoxin).